Here is a 398-residue protein sequence, read N- to C-terminus: Putative glutamate--cysteine ligase 2 (398 aa).

Belongs to the glutamate--cysteine ligase type 2 family. YbdK subfamily.

It catalyses the reaction L-cysteine + L-glutamate + ATP = gamma-L-glutamyl-L-cysteine + ADP + phosphate + H(+). Functionally, ATP-dependent carboxylate-amine ligase which exhibits weak glutamate--cysteine ligase activity. In Micrococcus luteus (strain ATCC 4698 / DSM 20030 / JCM 1464 / CCM 169 / CCUG 5858 / IAM 1056 / NBRC 3333 / NCIMB 9278 / NCTC 2665 / VKM Ac-2230) (Micrococcus lysodeikticus), this protein is Putative glutamate--cysteine ligase 2.